The chain runs to 414 residues: Translation initiation factor 2 subunit gamma (414 aa).

The region spanning 8–206 is the tr-type G domain; that stretch reads QPEVNIGVVG…AIEKFIPTPP (199 aa). The tract at residues 17–24 is G1; that stretch reads GHVDHGKT. Residues D20, T24, G45, and T47 each contribute to the Mg(2+) site. 20–25 is a GTP binding site; it reads DHGKTT. The tract at residues 45 to 49 is G2; the sequence is GMTIK. Zn(2+)-binding residues include C60, C63, C75, and C77. Residues 93 to 96 form a G3 region; the sequence is DAPG. Residues 149 to 152 and 184 to 186 each bind GTP; these read NKVD and SAL. The G4 stretch occupies residues 149–152; sequence NKVD. Residues 184–186 form a G5 region; it reads SAL.

This sequence belongs to the TRAFAC class translation factor GTPase superfamily. Classic translation factor GTPase family. EIF2G subfamily. As to quaternary structure, heterotrimer composed of an alpha, a beta and a gamma chain. Mg(2+) serves as cofactor.

The catalysed reaction is GTP + H2O = GDP + phosphate + H(+). In terms of biological role, eIF-2 functions in the early steps of protein synthesis by forming a ternary complex with GTP and initiator tRNA. The chain is Translation initiation factor 2 subunit gamma from Aeropyrum pernix (strain ATCC 700893 / DSM 11879 / JCM 9820 / NBRC 100138 / K1).